Here is an 846-residue protein sequence, read N- to C-terminus: Translation initiation factor IF-2 (846 aa).

The disordered stretch occupies residues 94 to 263 (QRSPEEIQAE…HGFQNPTGPV (170 aa)). Positions 96-135 (SPEEIQAEQKRELEERRAAENAARDKVEAEVRQRNEEQAR) are enriched in basic and acidic residues. 2 stretches are compositionally biased toward low complexity: residues 136–148 (RQAAGSTAAAPAP) and 158–176 (AAPVAAPAPVVADAPASED). Composition is skewed to basic and acidic residues over residues 177–206 (AAARAAERKKDETRRNESRTRDDDRRRGEA) and 230–239 (TTDEESDGAR). Over residues 240–253 (RGRGGKSKLKKRNQ) the composition is skewed to basic residues. The 168-residue stretch at 346-513 (SRAPVVTVMG…AVLLQAEILE (168 aa)) folds into the tr-type G domain. Residues 355 to 362 (GHVDHGKT) form a G1 region. Residue 355–362 (GHVDHGKT) participates in GTP binding. The segment at 380-384 (GITQH) is G2. Residues 401-404 (DTPG) form a G3 region. GTP is bound by residues 401 to 405 (DTPGH) and 455 to 458 (NKID). The segment at 455–458 (NKID) is G4. A G5 region spans residues 491-493 (SAK).

This sequence belongs to the TRAFAC class translation factor GTPase superfamily. Classic translation factor GTPase family. IF-2 subfamily.

It localises to the cytoplasm. Its function is as follows. One of the essential components for the initiation of protein synthesis. Protects formylmethionyl-tRNA from spontaneous hydrolysis and promotes its binding to the 30S ribosomal subunits. Also involved in the hydrolysis of GTP during the formation of the 70S ribosomal complex. The protein is Translation initiation factor IF-2 of Pseudomonas putida (strain ATCC 700007 / DSM 6899 / JCM 31910 / BCRC 17059 / LMG 24140 / F1).